The primary structure comprises 386 residues: 8-amino-7-oxononanoate synthase (386 aa).

Substrate is bound by residues R22 and R29. 109–110 (GY) lines the pyridoxal 5'-phosphate pocket. H134 serves as a coordination point for substrate. Residues S182, 207 to 210 (DDAH), and 237 to 240 (TLSK) contribute to the pyridoxal 5'-phosphate site. K240 carries the post-translational modification N6-(pyridoxal phosphate)lysine. Substrate is bound at residue T349.

Belongs to the class-II pyridoxal-phosphate-dependent aminotransferase family. BioF subfamily. As to quaternary structure, homodimer. It depends on pyridoxal 5'-phosphate as a cofactor.

The enzyme catalyses 6-carboxyhexanoyl-[ACP] + L-alanine + H(+) = (8S)-8-amino-7-oxononanoate + holo-[ACP] + CO2. It participates in cofactor biosynthesis; biotin biosynthesis. Functionally, catalyzes the decarboxylative condensation of pimeloyl-[acyl-carrier protein] and L-alanine to produce 8-amino-7-oxononanoate (AON), [acyl-carrier protein], and carbon dioxide. In Beijerinckia indica subsp. indica (strain ATCC 9039 / DSM 1715 / NCIMB 8712), this protein is 8-amino-7-oxononanoate synthase.